A 404-amino-acid polypeptide reads, in one-letter code: MKLPIYLDYSATTPVDPRVAEKMMQCLTLDGNFGNPASRSHRFGWHAEEAVDIARNQIAELVGADPREIVFTSGATESDNLAIKGAANFYQKKGKHIITSKTEHKAVLDTCRQLEREGFDVTYLAPKSNGIIDLKELEAAMRDDTILVSIMHVNNEIGVVQDIATIGEMCRARGIIYHVDATQSVGKLPIDLSQLKVDLMSFTGHKIYGPKGIGALYVRRKPRIRIEAQMHGGGHERGMRSGTLPVHQIVGMGEAYRIAKEEMETEMARLRTLRNRLWDGVKDMEEVYLNGDLEQGVPNILNVSFNYVEGESLIMALKDLAVSSGSACTSASLEPSYVLRALGMTDELAHSSIRFSLGRFTTEEEIDYTIKLVRNSIGRLRDLSPLWEMFKQGVDINSIEWSHH.

Pyridoxal 5'-phosphate contacts are provided by residues 75–76, Asn155, Gln183, and 203–205; these read AT and TGH. An N6-(pyridoxal phosphate)lysine modification is found at Lys206. Residue Thr243 participates in pyridoxal 5'-phosphate binding. Catalysis depends on Cys328, which acts as the Cysteine persulfide intermediate. Cys328 is a binding site for [2Fe-2S] cluster.

It belongs to the class-V pyridoxal-phosphate-dependent aminotransferase family. NifS/IscS subfamily. In terms of assembly, homodimer. Forms a heterotetramer with IscU, interacts with other sulfur acceptors. It depends on pyridoxal 5'-phosphate as a cofactor.

The protein localises to the cytoplasm. It catalyses the reaction (sulfur carrier)-H + L-cysteine = (sulfur carrier)-SH + L-alanine. It participates in cofactor biosynthesis; iron-sulfur cluster biosynthesis. Functionally, master enzyme that delivers sulfur to a number of partners involved in Fe-S cluster assembly, tRNA modification or cofactor biosynthesis. Catalyzes the removal of elemental sulfur atoms from cysteine to produce alanine. Functions as a sulfur delivery protein for Fe-S cluster synthesis onto IscU, an Fe-S scaffold assembly protein, as well as other S acceptor proteins. This chain is Cysteine desulfurase IscS, found in Enterobacter sp. (strain 638).